A 222-amino-acid chain; its full sequence is Cytidylate kinase (222 aa).

Residue 11 to 19 participates in ATP binding; it reads GPAGAGKST.

The protein belongs to the cytidylate kinase family. Type 1 subfamily.

The protein resides in the cytoplasm. The enzyme catalyses CMP + ATP = CDP + ADP. It catalyses the reaction dCMP + ATP = dCDP + ADP. This Desulforamulus reducens (strain ATCC BAA-1160 / DSM 100696 / MI-1) (Desulfotomaculum reducens) protein is Cytidylate kinase.